A 1035-amino-acid chain; its full sequence is DNA polymerase I B, mitochondrial (1035 aa).

A mitochondrion-targeting transit peptide spans 1 to 42; that stretch reads MAVAPPLPPAPARLLRRWQGSSPWLSSSFGRTRYFSRPAFAA. The tract at residues 100-124 is disordered; sequence TNGTTPLRVGNLRHDPSEDIRSSNY. The span at 111 to 120 shows a compositional bias: basic and acidic residues; sequence LRHDPSEDIR. In terms of domain architecture, 3'-5' exonuclease spans 317 to 478; the sequence is FGNGKTCIWV…LYESLKNKLE (162 aa). The tract at residues 699–1032 is polymerase; it reads HAIAALCEVF…VDAKYAKSWY (334 aa).

This sequence belongs to the DNA polymerase type-A family.

The protein resides in the mitochondrion. The catalysed reaction is DNA(n) + a 2'-deoxyribonucleoside 5'-triphosphate = DNA(n+1) + diphosphate. Its activity is regulated as follows. Not inhibited by aphidicolin. Its function is as follows. In addition to polymerase activity, this DNA polymerase exhibits 5'-3' exonuclease activity. May be required for DNA replication and accumulation in mitochondria. The polypeptide is DNA polymerase I B, mitochondrial (Oryza sativa subsp. japonica (Rice)).